A 274-amino-acid chain; its full sequence is Copper chaperone for superoxide dismutase (274 aa).

The region spanning 11–74 is the HMA domain; the sequence is VCALEFAVQM…LLESTGRQAV (64 aa). Positions 22 and 25 each coordinate Cu cation. Residue lysine 76 forms a Glycyl lysine isopeptide (Lys-Gly) (interchain with G-Cter in ubiquitin) linkage. The segment at 88-234 is superoxide dismutase-like; sequence AAVAILEGCG…LACGIIARSA (147 aa). A disulfide bond links cysteine 141 and cysteine 227. Residues histidine 147, histidine 155, histidine 164, and aspartate 167 each contribute to the Zn(2+) site. Residues lysine 189, lysine 216, and lysine 241 each participate in a glycyl lysine isopeptide (Lys-Gly) (interchain with G-Cter in ubiquitin) cross-link. Residues cysteine 244 and cysteine 246 each contribute to the Cu cation site. Serine 267 carries the post-translational modification Phosphoserine.

The protein in the C-terminal section; belongs to the Cu-Zn superoxide dismutase family. In terms of assembly, homodimer, and heterodimer with SOD1. Interacts with COMMD1. Interacts with XIAP/BIRC4. Interacts with SLC31A1(via C-terminal domain); this interaction is Cu(1+)-mediated. The heterodimer CCS:SOD1 interacts with SLC31A1; this heterotrimer is Cu(1+)-mediated and its maintenance is regulated through SOD1 activation. Requires Cu(2+) as cofactor. Zn(2+) serves as cofactor. In terms of processing, ubiquitinion by XIAP/BIRC4 leads to enhancement of its chaperone activity toward its physiologic target, SOD1, rather than proteasomal degradation. XIAP/BIRC4 preferentially ubiquitinates at Lys-241. As to expression, ubiquitous.

It is found in the cytoplasm. In terms of biological role, delivers copper to copper zinc superoxide dismutase (SOD1). The polypeptide is Copper chaperone for superoxide dismutase (Mus musculus (Mouse)).